We begin with the raw amino-acid sequence, 146 residues long: MLGLIQRVRRASVEVDQQVVGEIDQGMLLLLGIQKTDTEASADKLIDKLLAYRLFADADNRMNCNLQQVDGGILVVSQFTLAADTKKGLRPSFSSAAPPAQAQQLYDYFVTQLRSRHAKVATGIFAADMQVSLVNDGPVTFMLEMD.

The short motif at 137–138 (GP) is the Gly-cisPro motif, important for rejection of L-amino acids element.

This sequence belongs to the DTD family. In terms of assembly, homodimer.

It localises to the cytoplasm. It carries out the reaction glycyl-tRNA(Ala) + H2O = tRNA(Ala) + glycine + H(+). The catalysed reaction is a D-aminoacyl-tRNA + H2O = a tRNA + a D-alpha-amino acid + H(+). In terms of biological role, an aminoacyl-tRNA editing enzyme that deacylates mischarged D-aminoacyl-tRNAs. Also deacylates mischarged glycyl-tRNA(Ala), protecting cells against glycine mischarging by AlaRS. Acts via tRNA-based rather than protein-based catalysis; rejects L-amino acids rather than detecting D-amino acids in the active site. By recycling D-aminoacyl-tRNA to D-amino acids and free tRNA molecules, this enzyme counteracts the toxicity associated with the formation of D-aminoacyl-tRNA entities in vivo and helps enforce protein L-homochirality. This chain is D-aminoacyl-tRNA deacylase, found in Cellvibrio japonicus (strain Ueda107) (Pseudomonas fluorescens subsp. cellulosa).